A 526-amino-acid polypeptide reads, in one-letter code: Variant surface glycoprotein MITAT 1.4A (526 aa).

The N-terminal stretch at 1–33 is a signal peptide; that stretch reads MDCHTKETLGVTQWRRSTMLTLSLLYAITPADG. 2 disulfides stabilise this stretch: Cys-47–Cys-173 and Cys-154–Cys-215. The segment at 157–193 is disordered; it reads NEGGDGDGKDQLAPKGCRHGTEADFDAGAGPAESEVA. Residue Asn-453 is glycosylated (N-linked (GlcNAc...) asparagine). Residue Asp-503 is the site of GPI-anchor amidated aspartate attachment. Positions 504–526 are cleaved as a propeptide — removed in mature form; it reads SSILVTKKFALTVVSAAFVALLF.

The protein resides in the cell membrane. Its function is as follows. VSG forms a coat on the surface of the parasite. The trypanosome evades the immune response of the host by expressing a series of antigenically distinct VSGs from an estimated 1000 VSG genes. In Trypanosoma brucei brucei, this protein is Variant surface glycoprotein MITAT 1.4A.